A 430-amino-acid polypeptide reads, in one-letter code: MANVVVVGAQWGDEGKGKIVDWLSEQADIVVRFQGGHNAGHTLVINGATYKLALLPSGVLRSGKLSVIGNGVVFDPQAFLDEVGKLQAQGLIISPDNLRVAENVTLILPLHRELDALRESSNTGTAIGTTRRGIGPAYEDKVGRRAIRLMDLADLDTLPHKIDRLLAHHNALRRGLGLELIDGAEILRELTAVAPKLLPYAETVWRLLDIKRREGKRLLFEGAQGALLDVDHGTYPYVTSSNTVAAQAATGAGLGPGAIGYVLGLCKAYTTRVGQGPFPTEQDNETGRKIGERGREFGTNTGRPRRCGWFDAVLVRQAVRTCGINGLALTKLDILDGFDTIEVCTGYRLDGKEIDHFPAGEGAQARVEPIYETIEGWKQPTANARSWADLPAQAIKYVRRIEELVGCPIALLSTSPEREDTILVQNPFEA.

Residues 12–18 and 40–42 contribute to the GTP site; these read GDEGKGK and GHT. The active-site Proton acceptor is aspartate 13. The Mg(2+) site is built by aspartate 13 and glycine 40. IMP-binding positions include 13 to 16, 38 to 41, threonine 130, arginine 144, glutamine 224, and threonine 239; these read DEGK and NAGH. Residue histidine 41 is the Proton donor of the active site. The disordered stretch occupies residues 277-297; sequence PFPTEQDNETGRKIGERGREF. The segment covering 285–296 has biased composition (basic and acidic residues); that stretch reads ETGRKIGERGRE. 299–305 is a substrate binding site; the sequence is TNTGRPR. IMP is bound at residue arginine 303. Residues arginine 305, 331–333, and 413–415 each bind GTP; these read KLD and STS.

It belongs to the adenylosuccinate synthetase family. As to quaternary structure, homodimer. Mg(2+) is required as a cofactor.

The protein localises to the cytoplasm. It carries out the reaction IMP + L-aspartate + GTP = N(6)-(1,2-dicarboxyethyl)-AMP + GDP + phosphate + 2 H(+). The protein operates within purine metabolism; AMP biosynthesis via de novo pathway; AMP from IMP: step 1/2. In terms of biological role, plays an important role in the de novo pathway of purine nucleotide biosynthesis. Catalyzes the first committed step in the biosynthesis of AMP from IMP. The sequence is that of Adenylosuccinate synthetase from Bradyrhizobium sp. (strain ORS 278).